Consider the following 424-residue polypeptide: Serine hydroxymethyltransferase (424 aa).

(6S)-5,6,7,8-tetrahydrofolate-binding positions include L113 and 117 to 119 (GHL). K222 is subject to N6-(pyridoxal phosphate)lysine. (6S)-5,6,7,8-tetrahydrofolate is bound at residue 361 to 363 (SPF).

Belongs to the SHMT family. In terms of assembly, homodimer. The cofactor is pyridoxal 5'-phosphate.

Its subcellular location is the cytoplasm. It catalyses the reaction (6R)-5,10-methylene-5,6,7,8-tetrahydrofolate + glycine + H2O = (6S)-5,6,7,8-tetrahydrofolate + L-serine. The protein operates within one-carbon metabolism; tetrahydrofolate interconversion. It participates in amino-acid biosynthesis; glycine biosynthesis; glycine from L-serine: step 1/1. Its function is as follows. Catalyzes the reversible interconversion of serine and glycine with tetrahydrofolate (THF) serving as the one-carbon carrier. This reaction serves as the major source of one-carbon groups required for the biosynthesis of purines, thymidylate, methionine, and other important biomolecules. Also exhibits THF-independent aldolase activity toward beta-hydroxyamino acids, producing glycine and aldehydes, via a retro-aldol mechanism. The sequence is that of Serine hydroxymethyltransferase from Flavobacterium johnsoniae (strain ATCC 17061 / DSM 2064 / JCM 8514 / BCRC 14874 / CCUG 350202 / NBRC 14942 / NCIMB 11054 / UW101) (Cytophaga johnsonae).